Here is a 226-residue protein sequence, read N- to C-terminus: MALSDADVQKQIKHMMAFIEQEANEKAEEIDAKAEEEFNIEKGRLVQTQRLKIMEYYEKKEKQIEQQKKIQMSNLMNQARLKVLRARDDLITDLLNEAKQRLSKVVKDTTRYQVLLDGLVLQGLYQLLEPRMIVRCRKQDFPLVKAAVQKAIPMYKIATKKDVDVQIDLEAYLPEDIAGGVEIYNGDRKIKVSNTLESRLDLIAQQMMPEVRGALFGANANRKFLD.

Ala-2 bears the N-acetylalanine mark. Residue Tyr-56 is modified to Phosphotyrosine.

The protein belongs to the V-ATPase E subunit family. V-ATPase is a heteromultimeric enzyme made up of two complexes: the ATP-hydrolytic V1 complex and the proton translocation V0 complex. The V1 complex consists of three catalytic AB heterodimers that form a heterohexamer, three peripheral stalks each consisting of EG heterodimers, one central rotor including subunits D and F, and the regulatory subunits C and H. The proton translocation complex V0 consists of the proton transport subunit a, a ring of proteolipid subunits c9c'', rotary subunit d, subunits e and f, and the accessory subunits ATP6AP1/Ac45 and ATP6AP2/PRR. Interacts with RABL2/RABL2A; binds preferentially to GTP-bound RABL2. Interacts with ALDOC. Interacts with RAB11B. In terms of tissue distribution, expressed in brain (at protein level).

Its subcellular location is the apical cell membrane. The protein resides in the cytoplasmic vesicle. It localises to the secretory vesicle. The protein localises to the synaptic vesicle membrane. It is found in the clathrin-coated vesicle membrane. Subunit of the V1 complex of vacuolar(H+)-ATPase (V-ATPase), a multisubunit enzyme composed of a peripheral complex (V1) that hydrolyzes ATP and a membrane integral complex (V0) that translocates protons. V-ATPase is responsible for acidifying and maintaining the pH of intracellular compartments and in some cell types, is targeted to the plasma membrane, where it is responsible for acidifying the extracellular environment. The chain is V-type proton ATPase subunit E 1 (Atp6v1e1) from Rattus norvegicus (Rat).